The chain runs to 40 residues: Natriuretic peptide PpNP-b (40 aa).

A propeptide spanning residues 1 to 8 (SGSKTANI) is cleaved from the precursor. A disulfide bridge links cysteine 12 with cysteine 28. The segment at 20 to 40 (IGTTSGMGCGRPRPKPTPGGS) is disordered.

Belongs to the natriuretic peptide family. In terms of tissue distribution, expressed by the venom gland.

The protein localises to the secreted. Functionally, snake venom natriuretic peptide that targets both NPR1 and NPR2. Exhibits hypotensive and vasodepressor activities. The polypeptide is Natriuretic peptide PpNP-b (Pseudechis porphyriacus (Red-bellied black snake)).